Here is a 94-residue protein sequence, read N- to C-terminus: Pyrimidine/purine nucleoside phosphorylase (94 aa).

It belongs to the nucleoside phosphorylase PpnP family.

The enzyme catalyses a purine D-ribonucleoside + phosphate = a purine nucleobase + alpha-D-ribose 1-phosphate. The catalysed reaction is adenosine + phosphate = alpha-D-ribose 1-phosphate + adenine. It carries out the reaction cytidine + phosphate = cytosine + alpha-D-ribose 1-phosphate. It catalyses the reaction guanosine + phosphate = alpha-D-ribose 1-phosphate + guanine. The enzyme catalyses inosine + phosphate = alpha-D-ribose 1-phosphate + hypoxanthine. The catalysed reaction is thymidine + phosphate = 2-deoxy-alpha-D-ribose 1-phosphate + thymine. It carries out the reaction uridine + phosphate = alpha-D-ribose 1-phosphate + uracil. It catalyses the reaction xanthosine + phosphate = alpha-D-ribose 1-phosphate + xanthine. In terms of biological role, catalyzes the phosphorolysis of diverse nucleosides, yielding D-ribose 1-phosphate and the respective free bases. Can use uridine, adenosine, guanosine, cytidine, thymidine, inosine and xanthosine as substrates. Also catalyzes the reverse reactions. In Pseudomonas putida (strain W619), this protein is Pyrimidine/purine nucleoside phosphorylase.